The following is a 495-amino-acid chain: N-succinylglutamate 5-semialdehyde dehydrogenase (495 aa).

228–233 lines the NAD(+) pocket; the sequence is GSYATG. Residues Glu-251 and Cys-285 contribute to the active site.

It belongs to the aldehyde dehydrogenase family. AstD subfamily.

It carries out the reaction N-succinyl-L-glutamate 5-semialdehyde + NAD(+) + H2O = N-succinyl-L-glutamate + NADH + 2 H(+). Its pathway is amino-acid degradation; L-arginine degradation via AST pathway; L-glutamate and succinate from L-arginine: step 4/5. Its function is as follows. Catalyzes the NAD-dependent reduction of succinylglutamate semialdehyde into succinylglutamate. The polypeptide is N-succinylglutamate 5-semialdehyde dehydrogenase (Legionella pneumophila (strain Corby)).